A 797-amino-acid polypeptide reads, in one-letter code: Ribosome biogenesis protein BOP1 homolog (797 aa).

Disordered regions lie at residues 22–112 (LVPS…GGGP) and 149–177 (SICANTKPRAGPDPGSDSSEDERPNRNTV). The segment covering 61 to 73 (AGAAAAAVEGTAA) has biased composition (low complexity). The segment covering 74–87 (PEDEAADNSSEEDA) has biased composition (acidic residues). The segment covering 90–112 (GSHGEGAGEGGGSGTWPGNGGGP) has biased composition (gly residues). WD repeat units lie at residues 462 to 502 (GHMG…CWRT), 504 to 544 (VLEG…EEAE), 581 to 623 (RLRF…SQNP), 626 to 664 (KNRGRVVRVAFHPTKPFFFVATQNHVRVYNLAKQALAKK), 667 to 706 (GGGGVLSCLALHPGGDHVLVGSDDKRVAWYDLDLSTKPYK), 710 to 749 (YHSAPPRAVAFHRSYPLFASAADDGTVQVFHGMVYADLLT), and 766 to 797 (TASEGVADCAFHPTQPWIFTAGADSKILLYCN).

It belongs to the WD repeat BOP1/ERB1 family.

Its subcellular location is the nucleus. The protein resides in the nucleolus. It localises to the nucleoplasm. Functionally, required for maturation of ribosomal RNAs and formation of the large ribosomal subunit. The protein is Ribosome biogenesis protein BOP1 homolog of Chlamydomonas reinhardtii (Chlamydomonas smithii).